Consider the following 178-residue polypeptide: Protein FLOWERING LOCUS T 1 (178 aa).

It belongs to the phosphatidylethanolamine-binding protein family. In terms of tissue distribution, expressed in leaves but not in shoot apex.

Its function is as follows. Involved in the regulation of vernalization and of flowering time. This is Protein FLOWERING LOCUS T 1 from Brachypodium distachyon (Purple false brome).